Here is a 283-residue protein sequence, read N- to C-terminus: Pantothenate synthetase (283 aa).

Residue 34 to 41 (MGALHDGH) participates in ATP binding. His-41 serves as the catalytic Proton donor. Position 65 (Gln-65) interacts with (R)-pantoate. Gln-65 lines the beta-alanine pocket. 152–155 (GEKD) contributes to the ATP binding site. Position 158 (Gln-158) interacts with (R)-pantoate. ATP is bound by residues Val-181 and 189–192 (MSSR).

This sequence belongs to the pantothenate synthetase family. Homodimer.

The protein resides in the cytoplasm. It catalyses the reaction (R)-pantoate + beta-alanine + ATP = (R)-pantothenate + AMP + diphosphate + H(+). Its pathway is cofactor biosynthesis; (R)-pantothenate biosynthesis; (R)-pantothenate from (R)-pantoate and beta-alanine: step 1/1. Functionally, catalyzes the condensation of pantoate with beta-alanine in an ATP-dependent reaction via a pantoyl-adenylate intermediate. The sequence is that of Pantothenate synthetase from Bradyrhizobium sp. (strain BTAi1 / ATCC BAA-1182).